The sequence spans 192 residues: Imidazole glycerol phosphate synthase subunit HisH (192 aa).

Positions 1-192 (MIAIIDYGLG…QALKGGFIND (192 aa)) constitute a Glutamine amidotransferase type-1 domain. Cys77 acts as the Nucleophile in catalysis. Residues His169 and Glu171 contribute to the active site.

Heterodimer of HisH and HisF.

It is found in the cytoplasm. It carries out the reaction 5-[(5-phospho-1-deoxy-D-ribulos-1-ylimino)methylamino]-1-(5-phospho-beta-D-ribosyl)imidazole-4-carboxamide + L-glutamine = D-erythro-1-(imidazol-4-yl)glycerol 3-phosphate + 5-amino-1-(5-phospho-beta-D-ribosyl)imidazole-4-carboxamide + L-glutamate + H(+). It catalyses the reaction L-glutamine + H2O = L-glutamate + NH4(+). It participates in amino-acid biosynthesis; L-histidine biosynthesis; L-histidine from 5-phospho-alpha-D-ribose 1-diphosphate: step 5/9. IGPS catalyzes the conversion of PRFAR and glutamine to IGP, AICAR and glutamate. The HisH subunit catalyzes the hydrolysis of glutamine to glutamate and ammonia as part of the synthesis of IGP and AICAR. The resulting ammonia molecule is channeled to the active site of HisF. In Staphylococcus epidermidis (strain ATCC 35984 / DSM 28319 / BCRC 17069 / CCUG 31568 / BM 3577 / RP62A), this protein is Imidazole glycerol phosphate synthase subunit HisH.